The following is a 297-amino-acid chain: Virulence genes transcriptional activator SpvR (297 aa).

Positions 1 to 61 constitute an HTH lysR-type domain; it reads MDFLINKKLK…IRKNGTLIPT (61 aa). The H-T-H motif DNA-binding region spans 21–40; that stretch reads FSIATSVLYITRTPLSRVIS.

It belongs to the LysR transcriptional regulatory family.

The protein localises to the cytoplasm. Its function is as follows. Positive regulator for the plasmid-encoded virulence factors SpvA, SpvB, and SpvC. The sequence is that of Virulence genes transcriptional activator SpvR (spvR) from Salmonella dublin.